The chain runs to 215 residues: uncharacterized protein (215 aa).

Residues Gly-53, Glu-74, and Asp-97 each coordinate S-adenosyl-L-methionine.

Belongs to the methyltransferase superfamily. YrrT family.

Functionally, could be a S-adenosyl-L-methionine-dependent methyltransferase. This is an uncharacterized protein from Geobacillus thermodenitrificans (strain NG80-2).